A 215-amino-acid chain; its full sequence is Adenylate kinase (215 aa).

10 to 15 (GAGKGT) lines the ATP pocket. The tract at residues 30–59 (STGDLLRAAVAAGTPLGKEAKAYMDRGELV) is NMP. Residues Thr31, Arg36, 57 to 59 (ELV), 85 to 88 (GFPR), and Gln92 contribute to the AMP site. The tract at residues 126 to 163 (GRRTCKSCGQMYNVYYSPSKVEGKCDKCGGELFQRDDD) is LID. Arg127 lines the ATP pocket. Cys130, Cys133, Cys150, and Cys153 together coordinate Zn(2+). Residues Arg160 and Arg171 each contribute to the AMP site. ATP is bound at residue Gly199.

This sequence belongs to the adenylate kinase family. Monomer.

It is found in the cytoplasm. It carries out the reaction AMP + ATP = 2 ADP. It participates in purine metabolism; AMP biosynthesis via salvage pathway; AMP from ADP: step 1/1. In terms of biological role, catalyzes the reversible transfer of the terminal phosphate group between ATP and AMP. Plays an important role in cellular energy homeostasis and in adenine nucleotide metabolism. This chain is Adenylate kinase, found in Thermodesulfovibrio yellowstonii (strain ATCC 51303 / DSM 11347 / YP87).